The following is an 833-amino-acid chain: Multiple RNA-binding domain-containing protein 1 (833 aa).

Residues 2-83 (SRIIIKNIPR…SRIEVHRALD (82 aa)) enclose the RRM 1 domain. The disordered stretch occupies residues 160–251 (ENEEVFDTEI…DAQAPLSDDE (92 aa)). Basic and acidic residues-rich tracts occupy residues 188–205 (AAKR…HDST) and 213–222 (DGREKSSSEL). RRM domains are found at residues 323–401 (KRLF…PAKA), 506–578 (NVLL…KAPR), 619–702 (ATIY…LSHQ), and 721–798 (TKIL…YASN).

This sequence belongs to the RRM MRD1 family.

It localises to the nucleus. Involved in pre-rRNA processing. In Schizosaccharomyces pombe (strain 972 / ATCC 24843) (Fission yeast), this protein is Multiple RNA-binding domain-containing protein 1 (mrd1).